We begin with the raw amino-acid sequence, 634 residues long: GTP-binding protein 4 (634 aa).

An N-acetylalanine modification is found at alanine 2. An N6-acetyllysine; alternate modification is found at lysine 103. Lysine 103 is covalently cross-linked (Glycyl lysine isopeptide (Lys-Gly) (interchain with G-Cter in SUMO2); alternate). Phosphoserine is present on serine 122. The region spanning 169–340 (RTLLLCGYPN…VKTEACDRLL (172 aa)) is the OBG-type G domain. GTP contacts are provided by residues 175-182 (GYPNVGKS), 221-225 (DTPGI), and 289-292 (NKCD). Lysine 332 is covalently cross-linked (Glycyl lysine isopeptide (Lys-Gly) (interchain with G-Cter in SUMO2)). A phosphoserine mark is found at serine 468, serine 470, and serine 472. A disordered region spans residues 494-634 (KILQSKEKNK…KRKAGKKDRR (141 aa)). Lysine 534 is covalently cross-linked (Glycyl lysine isopeptide (Lys-Gly) (interchain with G-Cter in SUMO2)). Basic residues predominate over residues 544–554 (RRSRSVTRKRK). Serine 558 is subject to Phosphoserine. Positions 560–572 (PPSSTARSRSCSR) are enriched in low complexity. A compositionally biased stretch (basic and acidic residues) spans 573-585 (TPRDVSGLRDVKM). A compositionally biased stretch (basic residues) spans 586–604 (VKKAKTMMKKAQKKMNRLG). Residues 605–618 (KKGEADRHVFDMKP) show a composition bias toward basic and acidic residues. The span at 619 to 634 (KHLLSGKRKAGKKDRR) shows a compositional bias: basic residues.

Belongs to the TRAFAC class OBG-HflX-like GTPase superfamily. OBG GTPase family. NOG subfamily. Associates with pre-60S ribosomal particles. Interacts with MINAS-60 (product of an alternative open reading frame of RBM10). Ubiquitous.

Its subcellular location is the nucleus. It is found in the nucleolus. Its function is as follows. Involved in the biogenesis of the 60S ribosomal subunit. Acts as TP53 repressor, preventing TP53 stabilization and cell cycle arrest. This is GTP-binding protein 4 (Gtpbp4) from Mus musculus (Mouse).